The chain runs to 147 residues: TASADQIQECFQIFDKDNDGKVSIEELGSALRSLGKNPTNAELNTIKGQLNAKEFDLATFKTVYRKPIKTPTEQSKEMLDAFRALDKEGNGTIQEAELRQLLLNLGDALTSSEVEELMKEVSVSGDGAINYESFVDMLVTGYPLASA.

T1 is subject to N-acetylthreonine. EF-hand domains follow at residues 2–37, 73–108, and 109–144; these read ASAD…LGKN, EQSK…LGDA, and LTSS…GYPL. Ca(2+) contacts are provided by D15, D17, D19, K21, E26, D86, N90, T92, and E97.

This is Myosin regulatory light chain from Physarum polycephalum (Slime mold).